A 403-amino-acid polypeptide reads, in one-letter code: Coiled-coil domain-containing glutamate-rich protein 1 (403 aa).

Over residues 1 to 11 the composition is skewed to basic and acidic residues; that stretch reads MTQTVNEREDP. 5 disordered regions span residues 1–23, 51–70, 134–164, 202–241, and 261–350; these read MTQT…ASSI, IEYE…GSWF, RPPG…PPID, QQEK…VEED, and PALM…GEQR. The segment covering 137–157 has biased composition (basic residues); it reads GRKKRWGRRGRGLRRHPRRSF. A compositionally biased stretch (low complexity) spans 209–220; it reads QQAALRAQQAQE. The span at 261–271 shows a compositional bias: polar residues; that stretch reads PALMQHNQSPT. A compositionally biased stretch (acidic residues) spans 275 to 346; that stretch reads VEEEEKNVDD…YMLEETGLEE (72 aa). The stretch at 292 to 353 forms a coiled coil; sequence CDEKEESEEE…LEEGEQRAEE (62 aa).

In terms of tissue distribution, expressed in testis.

It is found in the nucleus. Its function is as follows. Regulator of histone epigenetic modifications and chromatin compaction into the sperm head, required for histone-to-protamine (HTP) transition. HTP is a key event in which somatic histones are first replaced by testis-specific histone variants, then transition proteins (TNPs) are incorporated into the spermatid nucleus, and finally protamines (PRMs) replace the TNPs to promote chromatin condensation. The polypeptide is Coiled-coil domain-containing glutamate-rich protein 1 (Ccer1) (Mus musculus (Mouse)).